Here is a 318-residue protein sequence, read N- to C-terminus: Ribose-phosphate pyrophosphokinase (318 aa).

Residues 46-48 and 105-106 each bind ATP; these read DGE and RQ. 2 residues coordinate Mg(2+): H139 and D178. The active site involves K201. D-ribose 5-phosphate-binding positions include R203, D227, and 231-235; that span reads DTAGT.

This sequence belongs to the ribose-phosphate pyrophosphokinase family. Class I subfamily. In terms of assembly, homohexamer. Mg(2+) serves as cofactor.

The protein resides in the cytoplasm. It catalyses the reaction D-ribose 5-phosphate + ATP = 5-phospho-alpha-D-ribose 1-diphosphate + AMP + H(+). The protein operates within metabolic intermediate biosynthesis; 5-phospho-alpha-D-ribose 1-diphosphate biosynthesis; 5-phospho-alpha-D-ribose 1-diphosphate from D-ribose 5-phosphate (route I): step 1/1. Its function is as follows. Involved in the biosynthesis of the central metabolite phospho-alpha-D-ribosyl-1-pyrophosphate (PRPP) via the transfer of pyrophosphoryl group from ATP to 1-hydroxyl of ribose-5-phosphate (Rib-5-P). This is Ribose-phosphate pyrophosphokinase from Helicobacter pylori (strain J99 / ATCC 700824) (Campylobacter pylori J99).